Here is a 1147-residue protein sequence, read N- to C-terminus: MSLQFVIGGSGAGKSYQLYQRVIESSLKEPKGKFLILVPEQFTLQTQKDLVTMHPKKGIHNIDILSFLRLAFRIFEETGGNDRLVLEDTGKSMIVKKVMMEKRNDLILFGANVKKQGFVEEMKSIISELAQYSIHTDELQKMKEVAKGKPLLNHKLTDIMTIYQAYEEFLQDKYINSEEILDLLCDVIDDSSFVNDSEICLDGFTGFTPSQYKLLSHLMKKAKSVTVTITMDESQINRKQEEHQLFYLSGKMAEKLTDLAITQKIEIKPPILVASENGGYSYRFHNSMALSALEKNIFRYPYKSFTEEQDDISITAAKDPMAEARHAVIEITRLLREEEYRYKDIAIVSGAMEVYGDIVKRELELAGIPCFVDHKKNILTNPVVEFLRSALDVVTHNFDYEAIFRFLKCGLTDFTMDEIDLFENYVIAFGIRGKYRYEHEWERKYKTNYEVDLEKINYVRECILKEFTPLYETLTSKKSSVRECVNALYNLLCTYHIEEKIHIFVEKFKAQGEKEDKLRAKEYEQIYRMVLEIFDRMVELLGEDVLPLKEFRDILDTGFREAKVGLIPPSIDQILVGDIERTRLKDIKALFFLGVNDGIVPKANPGGGILSDAERQLFADHEIELSPTKRQTAYLTEFYLYLNLTKPQNKLYLYYSKLDVSGKSIRASYLLGKISKIFPKLKIYDADRKSREDELLGTDQGLSYLISVLRDYEGEQPKLWREVYHLYVSGQIKGRISLDKVLQGVFYQNYEQGLTKEVARKLYGETLLGSVTRMEKYAACAFAHFLQYGLSLEERQEYKISMPDIGSLFHEALERFSKALKELDISWHELPEDVRISLGERCVREAVENFGNGILESSKRSAYLATRVERILQRTTKTLTHQLQQGVFEPGSYEQYFSHADRYLNLRGRIDRVDLYEQDGKLYVKVIDYKSGSTSFDLMNLYYGLQLQLGVYLSAAMELMKEQYPNHEIHPAGVFYYNLDDPIVTKSSSVEEDIEKKLAMNGLVNASKVVVPLLDTSFCGDEGELAPSTKSTVIPVETGKDGTFTKRSSVAKEEELITLTDYIKDLMHRFSEQIMEGKVRHNPYRAKNRNACTYCSFQSVCGFDCKVSGFSYRNLKTLNKEEVWNLIKKEDEFFGKDELDTGATEGN.

Residue 8-15 participates in ATP binding; sequence GGSGAGKS. [4Fe-4S] cluster contacts are provided by C780, C1092, C1095, and C1101.

This sequence belongs to the helicase family. AddB/RexB type 1 subfamily. Heterodimer of AddA and AddB. The cofactor is Mg(2+). [4Fe-4S] cluster serves as cofactor.

The heterodimer acts as both an ATP-dependent DNA helicase and an ATP-dependent, dual-direction single-stranded exonuclease. Recognizes the chi site generating a DNA molecule suitable for the initiation of homologous recombination. The AddB subunit has 5' -&gt; 3' nuclease activity but not helicase activity. The protein is ATP-dependent helicase/deoxyribonuclease subunit B of Lachnoclostridium phytofermentans (strain ATCC 700394 / DSM 18823 / ISDg) (Clostridium phytofermentans).